The primary structure comprises 79 residues: UPF0175 protein APE_0890a.1 (79 aa).

Belongs to the UPF0175 family.

This is UPF0175 protein APE_0890a.1 from Aeropyrum pernix (strain ATCC 700893 / DSM 11879 / JCM 9820 / NBRC 100138 / K1).